A 427-amino-acid chain; its full sequence is Serine--tRNA ligase (427 aa).

Position 232 to 234 (232 to 234 (TAE)) interacts with L-serine. 263–265 (RSE) lines the ATP pocket. Glu286 contacts L-serine. ATP is bound at residue 350–353 (EISS). Ser385 contributes to the L-serine binding site.

Belongs to the class-II aminoacyl-tRNA synthetase family. Type-1 seryl-tRNA synthetase subfamily. In terms of assembly, homodimer. The tRNA molecule binds across the dimer.

Its subcellular location is the cytoplasm. It carries out the reaction tRNA(Ser) + L-serine + ATP = L-seryl-tRNA(Ser) + AMP + diphosphate + H(+). It catalyses the reaction tRNA(Sec) + L-serine + ATP = L-seryl-tRNA(Sec) + AMP + diphosphate + H(+). The protein operates within aminoacyl-tRNA biosynthesis; selenocysteinyl-tRNA(Sec) biosynthesis; L-seryl-tRNA(Sec) from L-serine and tRNA(Sec): step 1/1. Its function is as follows. Catalyzes the attachment of serine to tRNA(Ser). Is also able to aminoacylate tRNA(Sec) with serine, to form the misacylated tRNA L-seryl-tRNA(Sec), which will be further converted into selenocysteinyl-tRNA(Sec). This Lacticaseibacillus paracasei (strain ATCC 334 / BCRC 17002 / CCUG 31169 / CIP 107868 / KCTC 3260 / NRRL B-441) (Lactobacillus paracasei) protein is Serine--tRNA ligase.